The chain runs to 687 residues: MEWLIFSLLLLAVSASGQLCPKRCMCQNLSPSLAILCAKTGLLFVPTVIDRRTVELRLTENFITAVKRRDFANMTSLLHLTLSRNTISQIMPYTFADLKRLRALHLDSNRLSVITDDHFRGLTNLRHLILANNQLHNISPHAFDDFLGTLEDLDLSYNNLVDIPWDTIGRLTNVNTLNMDHNLIEHVPLGIFSNLHKLARLDMTSNKLKKIPPDPLFLRIPVYAKSKGSPLSSLVLSFGGNPLHCNCELLWLRRLTREDDLETCASPPDLTAKYFWTIPEEEFICDPPVITRKSPKTFAMEGQPTSLKCKANGDPDPDVHWISPEGRLIANTSRTLSFSNGSLEINITSLKDTGIFTCIASNAAGESTGTVELVVSPLPHLANSTNRIREPDPGPSDILTSAKSTSSVSNETRSQERKVVLAELSANSALIRWPSQQHFPGIRMYQIQYNSSVDDTLVYRMIPSTSFDFLVRDLVSGREYDLCVLAVYDDGVTSLTATRQVGCVTFVTETEFSQCQSLRSHFLGGTMIIIIGGIIVASVLVFIIILMIRYKVYSQHGADSGKGTAMTNVRSQTNGGQAAGQVPRSSSKIVEGQEASGGSLGGAANIKDSTALVLVTDSETAVQISEISSEDIVSPTQRHHPRTCIELKRRPSLSCKEGTSSDTQEDTASPQVSDEKKAQRDWSDFKI.

An N-terminal signal peptide occupies residues 1–17 (MEWLIFSLLLLAVSASG). The LRRNT domain occupies 18-51 (QLCPKRCMCQNLSPSLAILCAKTGLLFVPTVIDR). Topologically, residues 18-527 (QLCPKRCMCQ…LRSHFLGGTM (510 aa)) are extracellular. LRR repeat units follow at residues 52 to 73 (RTVE…DFAN), 76 to 97 (SLLH…TFAD), 100 to 121 (RLRA…HFRG), 124 to 145 (NLRH…AFDD), 149 to 170 (TLED…TIGR), 173 to 194 (NVNT…IFSN), and 197 to 218 (KLAR…PLFL). Asparagine 73 carries an N-linked (GlcNAc...) asparagine glycan. The 47-residue stretch at 241-287 (NPLHCNCELLWLRRLTREDDLETCASPPDLTAKYFWTIPEEEFICDP) folds into the LRRCT domain. One can recognise an Ig-like domain in the interval 287 to 376 (PPVITRKSPK…STGTVELVVS (90 aa)). Cysteines 309 and 358 form a disulfide. N-linked (GlcNAc...) asparagine glycosylation is found at asparagine 331, asparagine 340, asparagine 346, asparagine 383, asparagine 410, and asparagine 450. A disordered region spans residues 384–412 (STNRIREPDPGPSDILTSAKSTSSVSNET). Positions 398-412 (ILTSAKSTSSVSNET) are enriched in polar residues. Positions 415 to 510 (QERKVVLAEL…VGCVTFVTET (96 aa)) constitute a Fibronectin type-III domain. Residues 528 to 548 (IIIIGGIIVASVLVFIIILMI) traverse the membrane as a helical segment. The Cytoplasmic portion of the chain corresponds to 549-687 (RYKVYSQHGA…AQRDWSDFKI (139 aa)). Disordered stretches follow at residues 563 to 601 (GTAM…GSLG) and 630 to 687 (EDIV…DFKI). 2 stretches are compositionally biased toward polar residues: residues 565–576 (AMTNVRSQTNGG) and 657–672 (EGTS…SPQV). Residues 673 to 687 (SDEKKAQRDWSDFKI) show a composition bias toward basic and acidic residues.

The protein belongs to the LRFN family.

The protein resides in the membrane. The protein localises to the synapse. Its function is as follows. May be involved in the regulation of excitatory synapses. This Danio rerio (Zebrafish) protein is Leucine-rich repeat and fibronectin type III domain-containing protein 1-like protein (lrfn1l).